We begin with the raw amino-acid sequence, 460 residues long: Argininosuccinate lyase (460 aa).

Belongs to the lyase 1 family. Argininosuccinate lyase subfamily.

It localises to the cytoplasm. It catalyses the reaction 2-(N(omega)-L-arginino)succinate = fumarate + L-arginine. The protein operates within amino-acid biosynthesis; L-arginine biosynthesis; L-arginine from L-ornithine and carbamoyl phosphate: step 3/3. The chain is Argininosuccinate lyase from Solibacter usitatus (strain Ellin6076).